Consider the following 324-residue polypeptide: tRNA N6-adenosine threonylcarbamoyltransferase (324 aa).

Fe cation-binding residues include H107, H111, and Y128. Residues 128-132 (YVSGG), D160, G173, E177, and N256 contribute to the substrate site. D284 is a binding site for Fe cation.

It belongs to the KAE1 / TsaD family. As to quaternary structure, monomer. Component of the KEOPS complex that consists of Kae1, Bud32, Cgi121 and Pcc1; the whole complex dimerizes. It depends on Fe(2+) as a cofactor.

It localises to the cytoplasm. The enzyme catalyses L-threonylcarbamoyladenylate + adenosine(37) in tRNA = N(6)-L-threonylcarbamoyladenosine(37) in tRNA + AMP + H(+). Its function is as follows. Required for the formation of a threonylcarbamoyl group on adenosine at position 37 (t(6)A37) in tRNAs that read codons beginning with adenine. Is a component of the KEOPS complex that is probably involved in the transfer of the threonylcarbamoyl moiety of threonylcarbamoyl-AMP (TC-AMP) to the N6 group of A37. Kae1 likely plays a direct catalytic role in this reaction, but requires other protein(s) of the complex to fulfill this activity. The protein is tRNA N6-adenosine threonylcarbamoyltransferase of Methanothrix thermoacetophila (strain DSM 6194 / JCM 14653 / NBRC 101360 / PT) (Methanosaeta thermophila).